We begin with the raw amino-acid sequence, 102 residues long: UPF0751 protein DSY4013 (102 aa).

The protein belongs to the UPF0751 family.

This Desulfitobacterium hafniense (strain Y51) protein is UPF0751 protein DSY4013.